A 169-amino-acid chain; its full sequence is N5-carboxyaminoimidazole ribonucleotide mutase (169 aa).

Substrate-binding residues include Ser16, Asp19, and Arg46.

Belongs to the AIR carboxylase family. Class I subfamily.

The enzyme catalyses 5-carboxyamino-1-(5-phospho-D-ribosyl)imidazole + H(+) = 5-amino-1-(5-phospho-D-ribosyl)imidazole-4-carboxylate. It functions in the pathway purine metabolism; IMP biosynthesis via de novo pathway; 5-amino-1-(5-phospho-D-ribosyl)imidazole-4-carboxylate from 5-amino-1-(5-phospho-D-ribosyl)imidazole (N5-CAIR route): step 2/2. Functionally, catalyzes the conversion of N5-carboxyaminoimidazole ribonucleotide (N5-CAIR) to 4-carboxy-5-aminoimidazole ribonucleotide (CAIR). This is N5-carboxyaminoimidazole ribonucleotide mutase from Escherichia coli O157:H7.